The chain runs to 346 residues: Probable galacturonosyltransferase-like 6 (346 aa).

A helical; Signal-anchor for type II membrane protein membrane pass occupies residues 1 to 21; that stretch reads MLWITRFAGLFSAAMAVIVLS. Residues 22–346 lie on the Lumenal side of the membrane; that stretch reads PSLQSFPPAA…TPYDLYRHSH (325 aa). N-linked (GlcNAc...) asparagine glycosylation is present at Asn-203.

Belongs to the glycosyltransferase 8 family.

It is found in the golgi apparatus membrane. Its pathway is glycan metabolism; pectin biosynthesis. Its function is as follows. May be involved in pectin and/or xylans biosynthesis in cell walls. This Arabidopsis thaliana (Mouse-ear cress) protein is Probable galacturonosyltransferase-like 6 (GATL6).